A 96-amino-acid polypeptide reads, in one-letter code: MTNPHDIIIKPVVTENSMMEMAEKKYTFVVAKKANKIEIKKAVEKIFDVKVEKVNTMNMIGKMKRMGKHIGRRSNWKKAVVTLTDGSKGIEFFEGM.

This sequence belongs to the universal ribosomal protein uL23 family. As to quaternary structure, part of the 50S ribosomal subunit. Contacts protein L29, and trigger factor when it is bound to the ribosome.

One of the early assembly proteins it binds 23S rRNA. One of the proteins that surrounds the polypeptide exit tunnel on the outside of the ribosome. Forms the main docking site for trigger factor binding to the ribosome. The sequence is that of Large ribosomal subunit protein uL23 from Alkaliphilus metalliredigens (strain QYMF).